Consider the following 295-residue polypeptide: Tyrosine recombinase XerC (295 aa).

A Core-binding (CB) domain is found at 1–85; the sequence is MLTALNRYWD…ALRRFLSFLV (85 aa). The Tyr recombinase domain maps to 106–285; it reads HLPKNMDGEQ…NFQHLAEVYD (180 aa). Active-site residues include R145, K169, H237, R240, and H263. Y272 functions as the O-(3'-phospho-DNA)-tyrosine intermediate in the catalytic mechanism.

The protein belongs to the 'phage' integrase family. XerC subfamily. In terms of assembly, forms a cyclic heterotetrameric complex composed of two molecules of XerC and two molecules of XerD.

The protein localises to the cytoplasm. Functionally, site-specific tyrosine recombinase, which acts by catalyzing the cutting and rejoining of the recombining DNA molecules. The XerC-XerD complex is essential to convert dimers of the bacterial chromosome into monomers to permit their segregation at cell division. It also contributes to the segregational stability of plasmids. This is Tyrosine recombinase XerC from Haemophilus influenzae (strain 86-028NP).